The chain runs to 511 residues: Ribonuclease Y (511 aa).

Residues 3-23 traverse the membrane as a helical segment; the sequence is VGILIGIIILGVVGFIQYTLI. In terms of domain architecture, KH spans 201 to 286; the sequence is TVHVVALPND…EMVERAIKDV (86 aa). In terms of domain architecture, HD spans 327 to 420; sequence VLKHSIEVSY…VQAADAISAA (94 aa).

The protein belongs to the RNase Y family.

The protein resides in the cell membrane. In terms of biological role, endoribonuclease that initiates mRNA decay. This chain is Ribonuclease Y, found in Clostridium perfringens (strain ATCC 13124 / DSM 756 / JCM 1290 / NCIMB 6125 / NCTC 8237 / Type A).